A 658-amino-acid chain; its full sequence is NADPH-dependent diflavin oxidoreductase 1 (658 aa).

The Flavodoxin-like domain occupies 16 to 160 (LTILYMTQTG…ELGPWMNRFW (145 aa)). FMN contacts are provided by residues 22–27 (TQTGTS), 69–72 (STTG), 107–116 (LGDSTYPRFC), and Asp142. The region spanning 215 to 502 (QGWSISILDK…IKPGYLTLPP (288 aa)) is the FAD-binding FR-type domain. Residues Arg400, 430–433 (REFS), and 474–477 (GLCT) contribute to the FAD site. Residues Thr514, 574-575 (SR), and 580-584 (KTYVQ) contribute to the NADP(+) site. Trp657 serves as a coordination point for FAD.

It belongs to the NADPH-dependent diflavin oxidoreductase NDOR1 family. The protein in the N-terminal section; belongs to the flavodoxin family. This sequence in the C-terminal section; belongs to the flavoprotein pyridine nucleotide cytochrome reductase family. As to quaternary structure, interacts with DRE2; as part of the cytosolic iron-sulfur (Fe-S) protein assembly (CIA) machinery. Requires FAD as cofactor. It depends on FMN as a cofactor.

Its subcellular location is the cytoplasm. It localises to the mitochondrion. It carries out the reaction 2 oxidized [2Fe-2S]-[protein] + NADPH = 2 reduced [2Fe-2S]-[protein] + NADP(+) + H(+). In terms of biological role, NADPH-dependent reductase which is a central component of the cytosolic iron-sulfur (Fe-S) protein assembly (CIA) machinery. Transfers electrons from NADPH via its FAD and FMN prosthetic groups to the [2Fe-2S] cluster of DRE2, another key component of the CIA machinery. In turn, this reduced cluster provides electrons for assembly of cytosolic iron-sulfur cluster proteins. Positively controls H(2)O(2)-induced cell death. The sequence is that of NADPH-dependent diflavin oxidoreductase 1 from Mycosarcoma maydis (Corn smut fungus).